A 291-amino-acid polypeptide reads, in one-letter code: Phosphate import ATP-binding protein PstB (291 aa).

The ABC transporter domain occupies 43–286 (ANVKDLSFWY…PKHAMTEEYI (244 aa)). Position 75–82 (75–82 (GASGCGKS)) interacts with ATP.

This sequence belongs to the ABC transporter superfamily. Phosphate importer (TC 3.A.1.7) family. In terms of assembly, the complex is composed of two ATP-binding proteins (PstB), two transmembrane proteins (PstC and PstA) and a solute-binding protein (PstS).

It localises to the cell inner membrane. It carries out the reaction phosphate(out) + ATP + H2O = ADP + 2 phosphate(in) + H(+). Its function is as follows. Part of the ABC transporter complex PstSACB involved in phosphate import. Responsible for energy coupling to the transport system. The protein is Phosphate import ATP-binding protein PstB of Alcaligenes faecalis.